We begin with the raw amino-acid sequence, 640 residues long: Threonine--tRNA ligase (640 aa).

The TGS domain maps to 1–61; that stretch reads MPTITLPDGS…ACDADVTIIT (61 aa). Residues 243 to 534 are catalytic; that stretch reads DHRKIGKALD…LIEQYAGNMP (292 aa). Positions 334, 385, and 511 each coordinate Zn(2+).

The protein belongs to the class-II aminoacyl-tRNA synthetase family. Homodimer. The cofactor is Zn(2+).

It localises to the cytoplasm. The enzyme catalyses tRNA(Thr) + L-threonine + ATP = L-threonyl-tRNA(Thr) + AMP + diphosphate + H(+). Catalyzes the attachment of threonine to tRNA(Thr) in a two-step reaction: L-threonine is first activated by ATP to form Thr-AMP and then transferred to the acceptor end of tRNA(Thr). Also edits incorrectly charged L-seryl-tRNA(Thr). This is Threonine--tRNA ligase from Dichelobacter nodosus (strain VCS1703A).